Here is a 917-residue protein sequence, read N- to C-terminus: Protein FAN (917 aa).

Residues 176-247 enclose the GRAM domain; sequence RLARTSFDKN…QDVRRIYKRR (72 aa). A BEACH-type PH domain is found at 189 to 286; it reads NISEKLHMEC…DRDDLYFYIA (98 aa). Positions 290 to 575 constitute a BEACH domain; it reads EHHVAEHTAE…QLFVTPHPRR (286 aa). WD repeat units lie at residues 628–658, 670–700, 712–740, 761–791, 803–833, and 884–914; these read IHKEAVTGITVSRNGSSVFTTSQDSTLKMFS, FSNMALSSCLLLPGDATVITSSWDNNVYFYS, GHDDAVSKICWHDNRLYSASWDSTVKVWS, EHDVSVDTISLNAASTLLVSGTKEGTVNIWD, CHSGIVCDTAFSPDSRHVLSTGTDGCLNVID, and GHTGAVTCIWMNEQCSSIITGGEDRQIIFWK.

As to expression, ubiquitous.

Its function is as follows. Couples the p55 TNF-receptor (TNF-R55 / TNFR1) to neutral sphingomyelinase (N-SMASE). Specifically binds to the N-smase activation domain of TNF-R55. May regulate ceramide production by N-SMASE. This is Protein FAN (NSMAF) from Homo sapiens (Human).